Here is a 40-residue protein sequence, read N- to C-terminus: Photosystem II reaction center protein J (40 aa).

A helical transmembrane segment spans residues Ile8–Phe28.

The protein belongs to the PsbJ family. As to quaternary structure, PSII is composed of 1 copy each of membrane proteins PsbA, PsbB, PsbC, PsbD, PsbE, PsbF, PsbH, PsbI, PsbJ, PsbK, PsbL, PsbM, PsbT, PsbX, PsbY, PsbZ, Psb30/Ycf12, at least 3 peripheral proteins of the oxygen-evolving complex and a large number of cofactors. It forms dimeric complexes.

Its subcellular location is the plastid. The protein resides in the chloroplast thylakoid membrane. In terms of biological role, one of the components of the core complex of photosystem II (PSII). PSII is a light-driven water:plastoquinone oxidoreductase that uses light energy to abstract electrons from H(2)O, generating O(2) and a proton gradient subsequently used for ATP formation. It consists of a core antenna complex that captures photons, and an electron transfer chain that converts photonic excitation into a charge separation. This chain is Photosystem II reaction center protein J, found in Angiopteris evecta (Mule's foot fern).